Reading from the N-terminus, the 418-residue chain is 3-isopropylmalate dehydratase large subunit (418 aa).

[4Fe-4S] cluster-binding residues include C297, C357, and C360.

This sequence belongs to the aconitase/IPM isomerase family. LeuC type 2 subfamily. In terms of assembly, heterodimer of LeuC and LeuD. [4Fe-4S] cluster serves as cofactor.

The enzyme catalyses (2R,3S)-3-isopropylmalate = (2S)-2-isopropylmalate. It functions in the pathway amino-acid biosynthesis; L-leucine biosynthesis; L-leucine from 3-methyl-2-oxobutanoate: step 2/4. Its function is as follows. Catalyzes the isomerization between 2-isopropylmalate and 3-isopropylmalate, via the formation of 2-isopropylmaleate. This chain is 3-isopropylmalate dehydratase large subunit, found in Elusimicrobium minutum (strain Pei191).